Here is a 664-residue protein sequence, read N- to C-terminus: Methionine--tRNA ligase (664 aa).

The short motif at 15–25 is the 'HIGH' region element; that stretch reads YYPSGKLHIGH. The 'KMSKS' region motif lies at 311–315; sequence KMSKS. Residue Lys-314 participates in ATP binding. The interval 536-556 is disordered; it reads MQGSAPAKEETKEEEPQEVDR. The tRNA-binding domain occupies 570–662; it reads LRVAEVIEAE…IDQSLPKGTR (93 aa).

The protein belongs to the class-I aminoacyl-tRNA synthetase family. MetG type 2B subfamily. As to quaternary structure, homodimer.

It is found in the cytoplasm. It carries out the reaction tRNA(Met) + L-methionine + ATP = L-methionyl-tRNA(Met) + AMP + diphosphate. In terms of biological role, is required not only for elongation of protein synthesis but also for the initiation of all mRNA translation through initiator tRNA(fMet) aminoacylation. This chain is Methionine--tRNA ligase (metG), found in Bacillus subtilis (strain 168).